A 754-amino-acid polypeptide reads, in one-letter code: Fibronectin type III domain-containing protein 1 (754 aa).

The signal sequence occupies residues Met1 to Gly19. Disordered regions lie at residues Ser40–Gly61, Ala85–Ser106, and Ala130–Gly163. Positions Ala130–Gln161 are enriched in low complexity. Fibronectin type-III domains are found at residues Pro250 to Leu355, Ala359 to Phe449, Ala453 to Asp545, Glu549 to Pro642, and Leu645 to Gly742. Residues Ser731 to Ile754 form a disordered region.

As to expression, prismatic layer of shell (at protein level). Expressed primarily in the mantle with highest level in the outer epithelium of the mantle edge and lower level in the mantle pallium.

It localises to the secreted. This Margaritifera margaritifera (Freshwater pearl mussel) protein is Fibronectin type III domain-containing protein 1.